The sequence spans 419 residues: Putative zinc metalloprotease M6_Spy1682 (419 aa).

H18 contacts Zn(2+). Residue E19 is part of the active site. H22 lines the Zn(2+) pocket. 4 consecutive transmembrane segments (helical) span residues 169–191 (LITNFAGPMNNFILGIVVFILLV), 301–323 (LAWSGAFTILNALKGLITGFSLN), 343–365 (LESVLSLMAMLSINLGIFNLIPI), and 392–411 (AYITLAGVAIMVVLMIAVTW). The 100-residue stretch at 175–274 (GPMNNFILGI…LKTVAVKPQK (100 aa)) folds into the PDZ domain.

It belongs to the peptidase M50B family. The cofactor is Zn(2+).

It is found in the cell membrane. This is Putative zinc metalloprotease M6_Spy1682 from Streptococcus pyogenes serotype M6 (strain ATCC BAA-946 / MGAS10394).